The chain runs to 342 residues: CD2 antigen cytoplasmic tail-binding protein 2 (342 aa).

Positions 1–64 (MPKRKVTFQG…DEEGSSKYDI (64 aa)) are disordered. Residue lysine 26 forms a Glycyl lysine isopeptide (Lys-Gly) (interchain with G-Cter in SUMO2) linkage. Lysine 44 bears the N6-acetyllysine mark. A phosphoserine mark is found at serine 46, serine 49, and serine 117. Disordered stretches follow at residues 130–150 (RPPDKHQVSDSEEEDSLGQTP) and 177–200 (LGARGGGKGSNSKGTGRPNSPQRL). Phosphoserine is present on serine 196. The GYF domain occupies 281–339 (DVMWEYKWENTGDAELYGPFTSAQMQTWVSEGYFPDGVYCRKLDPPGGQFYNSKRIDFE).

As to quaternary structure, component of the U5 snRNP complex composed of the U5 snRNA and at least PRPF6, PRPF8, SNRNP200, EFTUD2, SNRNP40, DDX23, TXNL4A and CD2BP2. Interacts directly with TXNL4A and PRPF6. Interacts (via GYF domain) with CD2 (via Pro-rich sequence in the cytoplasmic domain). Interacts with PQBP1.

Its subcellular location is the cytoplasm. It is found in the nucleus. Its function is as follows. Involved in pre-mRNA splicing as component of the U5 snRNP complex that is involved in spliceosome assembly. The sequence is that of CD2 antigen cytoplasmic tail-binding protein 2 (Cd2bp2) from Mus musculus (Mouse).